A 64-amino-acid chain; its full sequence is Conotoxin Im11.4 (64 aa).

The N-terminal stretch at 1 to 26 (MMFRLTSVSCILLVIAFLNLVGLTNA) is a signal peptide. Intrachain disulfides connect Cys-27–Cys-41, Cys-34–Cys-46, Cys-40–Cys-50, and Cys-45–Cys-54. A Histidine amide modification is found at His-57. The propeptide occupies 61–64 (ATFQ).

It belongs to the conotoxin I2 superfamily. Expressed by the venom duct.

It is found in the secreted. In Conus imperialis (Imperial cone), this protein is Conotoxin Im11.4.